Here is a 284-residue protein sequence, read N- to C-terminus: Nucleotide-binding protein NMCC_0698 (284 aa).

8 to 15 (GLSGSGKS) lines the ATP pocket. 58–61 (DVRS) contributes to the GTP binding site.

The protein belongs to the RapZ-like family.

Functionally, displays ATPase and GTPase activities. This Neisseria meningitidis serogroup C (strain 053442) protein is Nucleotide-binding protein NMCC_0698.